The sequence spans 294 residues: Glycine--tRNA ligase alpha subunit (294 aa).

The protein belongs to the class-II aminoacyl-tRNA synthetase family. In terms of assembly, tetramer of two alpha and two beta subunits.

It is found in the cytoplasm. It catalyses the reaction tRNA(Gly) + glycine + ATP = glycyl-tRNA(Gly) + AMP + diphosphate. The chain is Glycine--tRNA ligase alpha subunit from Lawsonia intracellularis (strain PHE/MN1-00).